The sequence spans 287 residues: MTLPASPPRYAVIGNPIAHSRSPQIHAMFSAQTGRPLRYERLLAPVDGFLPTVQAFRESGGLGLNVTVPFKLEAYALAEARLSERARLAGAVNTLSWRDGAWHGCNTDGVGLVNDLLRLGVALAGARVLLVGAGGAARGVLQPLAAAGCARIHIVNRTAARAAELAAAWRAAAPRTGTQVSAGALAQAAEPGGWDVAINATASSLQDAAPDLPGGLYAPDALAYDMMYGARPTAFMRQAEADGAARCADGLGMLVGQAAESFHIWHGVRPDPGPVLLALRTELLAAG.

Shikimate-binding positions include 20 to 22 and T67; that span reads SRS. K71 serves as the catalytic Proton acceptor. An NADP(+)-binding site is contributed by E84. Shikimate-binding residues include N93 and D108. NADP(+) is bound by residues 132–136, 156–161, and M226; these read GAGGA and NRTAAR. Residue Y228 participates in shikimate binding. G250 lines the NADP(+) pocket.

This sequence belongs to the shikimate dehydrogenase family. In terms of assembly, homodimer.

It catalyses the reaction shikimate + NADP(+) = 3-dehydroshikimate + NADPH + H(+). It functions in the pathway metabolic intermediate biosynthesis; chorismate biosynthesis; chorismate from D-erythrose 4-phosphate and phosphoenolpyruvate: step 4/7. Involved in the biosynthesis of the chorismate, which leads to the biosynthesis of aromatic amino acids. Catalyzes the reversible NADPH linked reduction of 3-dehydroshikimate (DHSA) to yield shikimate (SA). The protein is Shikimate dehydrogenase (NADP(+)) of Bordetella parapertussis (strain 12822 / ATCC BAA-587 / NCTC 13253).